The following is a 426-amino-acid chain: Histidine--tRNA ligase (426 aa).

Belongs to the class-II aminoacyl-tRNA synthetase family. Homodimer.

The protein resides in the cytoplasm. The enzyme catalyses tRNA(His) + L-histidine + ATP = L-histidyl-tRNA(His) + AMP + diphosphate + H(+). This Colwellia psychrerythraea (strain 34H / ATCC BAA-681) (Vibrio psychroerythus) protein is Histidine--tRNA ligase.